The chain runs to 158 residues: Dysbindin domain-containing protein 1 (158 aa).

The interval 1-38 is disordered; the sequence is MEPSEGASPGGLVKEVDMPQAALSAPVPVTGTSGQSPM. Residues serine 95 and serine 119 each carry the phosphoserine modification. The segment at 96-158 is disordered; the sequence is DDENVASDSH…ILTVERPKED (63 aa). The span at 125-141 shows a compositional bias: basic and acidic residues; the sequence is TRAEQNREKQPFGDPER.

Belongs to the dysbindin family.

The polypeptide is Dysbindin domain-containing protein 1 (DBNDD1) (Bos taurus (Bovine)).